The sequence spans 248 residues: Pyruvate formate-lyase-activating enzyme (248 aa).

Residues 17–248 (VDGPGIRFIV…NKILETSSYK (232 aa)) enclose the Radical SAM core domain. Residues C31, C35, and C38 each contribute to the [4Fe-4S] cluster site. Residues 37 to 39 (FCH), G80, 135 to 137 (DIK), and H208 contribute to the S-adenosyl-L-methionine site.

Belongs to the organic radical-activating enzymes family. It depends on [4Fe-4S] cluster as a cofactor.

Its subcellular location is the cytoplasm. The catalysed reaction is glycyl-[formate C-acetyltransferase] + reduced [flavodoxin] + S-adenosyl-L-methionine = glycin-2-yl radical-[formate C-acetyltransferase] + semiquinone [flavodoxin] + 5'-deoxyadenosine + L-methionine + H(+). Its function is as follows. Activation of pyruvate formate-lyase under anaerobic conditions by generation of an organic free radical, using S-adenosylmethionine and reduced flavodoxin as cosubstrates to produce 5'-deoxy-adenosine. This Listeria innocua serovar 6a (strain ATCC BAA-680 / CLIP 11262) protein is Pyruvate formate-lyase-activating enzyme (pflA).